Consider the following 318-residue polypeptide: Ankyrin repeat domain-containing protein 1 (318 aa).

Residues 37–77 (ALEKQEDLKTTSKSLIELEEEKQIKEKQLKSELLKKKLEER) adopt a coiled-coil conformation. ANK repeat units follow at residues 118 to 147 (VDQT…DPNT), 151 to 180 (YKRT…NIEF), 184 to 213 (LEST…AINA), 217 to 246 (LLST…DLHA), 250 to 279 (EGDT…DLNI), and 283 to 314 (AGKT…KNSH).

The protein localises to the nucleus. May act as a nuclear transcription factor that negatively regulates the expression of cardiac genes. In Xenopus tropicalis (Western clawed frog), this protein is Ankyrin repeat domain-containing protein 1 (ankrd1).